The following is a 749-amino-acid chain: 5-methyltetrahydropteroyltriglutamate--homocysteine methyltransferase (749 aa).

5-methyltetrahydropteroyltri-L-glutamate is bound by residues 15–18 (RELK) and Lys-114. L-homocysteine-binding positions include 425–427 (IGS) and Glu-478. L-methionine-binding positions include 425–427 (IGS) and Glu-478. A 5-methyltetrahydropteroyltri-L-glutamate-binding site is contributed by Trp-555. Residue Asp-593 participates in L-homocysteine binding. Position 593 (Asp-593) interacts with L-methionine. Position 599 (Glu-599) interacts with 5-methyltetrahydropteroyltri-L-glutamate. Residues His-636, Cys-638, and Glu-660 each contribute to the Zn(2+) site. Residue His-689 is the Proton donor of the active site. Position 721 (Cys-721) interacts with Zn(2+).

Belongs to the vitamin-B12 independent methionine synthase family. It depends on Zn(2+) as a cofactor.

It catalyses the reaction 5-methyltetrahydropteroyltri-L-glutamate + L-homocysteine = tetrahydropteroyltri-L-glutamate + L-methionine. Its pathway is amino-acid biosynthesis; L-methionine biosynthesis via de novo pathway; L-methionine from L-homocysteine (MetE route): step 1/1. In terms of biological role, catalyzes the transfer of a methyl group from 5-methyltetrahydrofolate to homocysteine resulting in methionine formation. The protein is 5-methyltetrahydropteroyltriglutamate--homocysteine methyltransferase of Streptococcus pneumoniae serotype 2 (strain D39 / NCTC 7466).